Consider the following 367-residue polypeptide: MPHLSNLKVQQFRNLGLVDITPSPTLNLVYGENGSGKTSLLEAISVLAHCRSFRTHKYRRLIQDTTTAFTVFATVEGSDAFKVGVQREWSGKSTAKLDGLSAKSSAQLATNLPVQIIDAHTFALLEGGSKARRKFFDWLVFHVKHEFKTAWANYVKCVKQRNSLLRHDKIAYSDLRPWDEQIAGLAATIDECRVECITPLIQAFKALMGECKFADNVDLTLAYQPGWKEGELSFPKQLEQAFARDRKLGYTILGPHKSDLKITANGSPAVEVLSRGQQKAVINALHIAEAQVYKTQIGRTPVFLLDDMPSELDANHIAILSGWLSNLGAQVFVTGVDANKLASVWPLQKNEAIKMFHVKQGEVTVSQ.

Residue Gly-31–Thr-38 participates in ATP binding.

It belongs to the RecF family.

It localises to the cytoplasm. In terms of biological role, the RecF protein is involved in DNA metabolism; it is required for DNA replication and normal SOS inducibility. RecF binds preferentially to single-stranded, linear DNA. It also seems to bind ATP. In Saccharophagus degradans (strain 2-40 / ATCC 43961 / DSM 17024), this protein is DNA replication and repair protein RecF.